Consider the following 376-residue polypeptide: MSSWSNQPAMDDYGLPSSNPYGNFTVVDMAPKDILHMIHPHWYQYPPMNPMMYPLLLIFMLFTGILCLAGNFVTIWVFMNTKSLRTPANLLVVNLAMSDFLMMFTMFPPMMVTCYYHTWTLGPTFCQVYAFLGNLCGCASIWTMVFITFDRYNVIVKGVAGEPLSTKKASLWILTIWVLSITWCIAPFFGWNRYVPEGNLTGCGTDYLSEDILSRSYLYDYSTWVYYLPLLPIYCYVSIIKAVAAHEKGMRDQAKKMGIKSLRNEEAQKTSAECRLAKIAMTTVALWFIAWTPYLLINWVGMFARSYLSPVYTIWGYVFAKANAVYNPIVYAISHPKYRAAMEKKLPCLSCKTESDDVSESASTTTSSAEEKAESA.

Residues 1–52 (MSSWSNQPAMDDYGLPSSNPYGNFTVVDMAPKDILHMIHPHWYQYPPMNPMM) are Extracellular-facing. N23 carries an N-linked (GlcNAc...) asparagine glycan. The helical transmembrane segment at 53 to 77 (YPLLLIFMLFTGILCLAGNFVTIWV) threads the bilayer. The Cytoplasmic segment spans residues 78–89 (FMNTKSLRTPAN). The helical transmembrane segment at 90-112 (LLVVNLAMSDFLMMFTMFPPMMV) threads the bilayer. Topologically, residues 113–126 (TCYYHTWTLGPTFC) are extracellular. C126 and C203 are joined by a disulfide. A helical transmembrane segment spans residues 127–149 (QVYAFLGNLCGCASIWTMVFITF). A 'Ionic lock' involved in activated form stabilization motif is present at residues 150 to 152 (DRY). Residues 150–168 (DRYNVIVKGVAGEPLSTKK) are Cytoplasmic-facing. Residues 169-189 (ASLWILTIWVLSITWCIAPFF) traverse the membrane as a helical segment. Residues 190–216 (GWNRYVPEGNLTGCGTDYLSEDILSRS) lie on the Extracellular side of the membrane. N-linked (GlcNAc...) asparagine glycosylation is present at N199. The chain crosses the membrane as a helical span at residues 217 to 237 (YLYDYSTWVYYLPLLPIYCYV). The Cytoplasmic segment spans residues 238 to 278 (SIIKAVAAHEKGMRDQAKKMGIKSLRNEEAQKTSAECRLAK). The helical transmembrane segment at 279–300 (IAMTTVALWFIAWTPYLLINWV) threads the bilayer. Over 301 to 311 (GMFARSYLSPV) the chain is Extracellular. Residues 312-333 (YTIWGYVFAKANAVYNPIVYAI) form a helical membrane-spanning segment. K321 carries the N6-(retinylidene)lysine modification. Topologically, residues 334–376 (SHPKYRAAMEKKLPCLSCKTESDDVSESASTTTSSAEEKAESA) are cytoplasmic. The tract at residues 353-376 (TESDDVSESASTTTSSAEEKAESA) is disordered.

This sequence belongs to the G-protein coupled receptor 1 family. Opsin subfamily. As to quaternary structure, homodimer. Interacts with GNAQ. Post-translationally, contains one covalently linked retinal chromophore. In terms of tissue distribution, detected on rhabdomere membranes on photoreceptor cells in the retina (at protein level).

The protein resides in the cell projection. It localises to the rhabdomere membrane. Photoreceptor required for image-forming vision at low light intensity. Can use both retinal and 3-dehydroretinal as visual pigment. Light-induced isomerization of 11-cis to all-trans retinal triggers a conformational change that activates signaling via G-proteins. Signaling via GNAQ probably mediates the activation of phospholipase C. The chain is Rhodopsin (RHO) from Procambarus clarkii (Red swamp crayfish).